Here is a 252-residue protein sequence, read N- to C-terminus: Imidazole glycerol phosphate synthase subunit HisF (252 aa).

Catalysis depends on residues Asp11 and Asp130.

It belongs to the HisA/HisF family. As to quaternary structure, heterodimer of HisH and HisF.

The protein localises to the cytoplasm. It catalyses the reaction 5-[(5-phospho-1-deoxy-D-ribulos-1-ylimino)methylamino]-1-(5-phospho-beta-D-ribosyl)imidazole-4-carboxamide + L-glutamine = D-erythro-1-(imidazol-4-yl)glycerol 3-phosphate + 5-amino-1-(5-phospho-beta-D-ribosyl)imidazole-4-carboxamide + L-glutamate + H(+). The protein operates within amino-acid biosynthesis; L-histidine biosynthesis; L-histidine from 5-phospho-alpha-D-ribose 1-diphosphate: step 5/9. Functionally, IGPS catalyzes the conversion of PRFAR and glutamine to IGP, AICAR and glutamate. The HisF subunit catalyzes the cyclization activity that produces IGP and AICAR from PRFAR using the ammonia provided by the HisH subunit. This Bacillus mycoides (strain KBAB4) (Bacillus weihenstephanensis) protein is Imidazole glycerol phosphate synthase subunit HisF.